The sequence spans 319 residues: NAP1-binding protein (319 aa).

The segment covering 34 to 43 has biased composition (basic residues); the sequence is SALRSRRKQM. Residues 34–74 are disordered; it reads SALRSRRKQMRPTGKSVLKRPRKVTDRKTEEKIRTNRRKTP. Over residues 56–67 the composition is skewed to basic and acidic residues; sequence KVTDRKTEEKIR. S251 and S260 each carry phosphoserine. The tract at residues 278–319 is disordered; the sequence is EMQPLQENISPACPTPPYRSRETEKEDETLSPISVDFSSYLS.

In terms of assembly, interacts with NDC1 and MPS2.

This Saccharomyces cerevisiae (strain ATCC 204508 / S288c) (Baker's yeast) protein is NAP1-binding protein (NBP1).